We begin with the raw amino-acid sequence, 269 residues long: Glutamate racemase (269 aa).

Residues 13 to 14 (DS) and 45 to 46 (YS) each bind substrate. Cys-77 (proton donor/acceptor) is an active-site residue. Position 78–79 (78–79 (NT)) interacts with substrate. Cys-188 (proton donor/acceptor) is an active-site residue. Residue 189-190 (TH) participates in substrate binding.

The protein belongs to the aspartate/glutamate racemases family.

It catalyses the reaction L-glutamate = D-glutamate. The protein operates within cell wall biogenesis; peptidoglycan biosynthesis. In terms of biological role, provides the (R)-glutamate required for cell wall biosynthesis. This chain is Glutamate racemase, found in Pasteurella multocida (strain Pm70).